The sequence spans 147 residues: UPF0260 protein PMI1174 (147 aa).

It belongs to the UPF0260 family.

The chain is UPF0260 protein PMI1174 from Proteus mirabilis (strain HI4320).